A 3210-amino-acid polypeptide reads, in one-letter code: PF 1022-synthetase (3210 aa).

The condensation 1 stretch occupies residues 68–454; it reads VDDRRHAIGH…VKELDVVTAE (387 aa). The adenylation 1 stretch occupies residues 483-876; it reads AGDPNKAAVF…GRKDSQVKIR (394 aa). Residues 1010–1086 enclose the Carrier 1 domain; the sequence is APATGIEVKL…GLVDVIGRDP (77 aa). At S1047 the chain carries O-(pantetheine 4'-phosphoryl)serine. Residues 1104 to 1534 form a condensation 2 region; it reads SFAQGRLWFL…RTPIAVLPLT (431 aa). Residues 1563–2023 are adenylation 2; it reads FRKQVAAHPH…GRMDQQVKIR (461 aa). The S-adenosyl-L-methionine-dependent N-methyltransferase stretch occupies residues 2081 to 2236; the sequence is EGWKDFFESN…YLLEVVESLV (156 aa). 2 Carrier domains span residues 2570 to 2644 and 2668 to 2742; these read DPFV…RQGL and TPSD…RLTQ. 2 positions are modified to O-(pantetheine 4'-phosphoryl)serine: S2604 and S2702. Residues 2788–3203 are condensation 3; that stretch reads LDVYPATQMQ…KRMLEELCGN (416 aa). Positions 2976–3002 are disordered; that stretch reads VIKGNNNTTPPPPPQQQSTPSGAHHAS.

This sequence belongs to the NRP synthetase family. It depends on pantetheine 4'-phosphate as a cofactor.

The enzyme catalyses 2 (R)-3-phenyllactate + 2 (R)-lactate + 4 L-leucine + 4 S-adenosyl-L-methionine + 8 ATP = PF1022A + 8 AMP + 4 S-adenosyl-L-homocysteine + 8 diphosphate + 8 H(+). The catalysed reaction is 4 (R)-3-phenyllactate + 4 L-leucine + 4 S-adenosyl-L-methionine + 8 ATP = PF1022B + 8 AMP + 4 S-adenosyl-L-homocysteine + 8 diphosphate + 8 H(+). It catalyses the reaction 3 (R)-3-phenyllactate + (R)-lactate + 4 L-leucine + 4 S-adenosyl-L-methionine + 8 ATP = PF1022C + 8 AMP + 4 S-adenosyl-L-homocysteine + 8 diphosphate + 8 H(+). It carries out the reaction (R)-3-phenyllactate + 3 (R)-lactate + 4 L-leucine + 4 S-adenosyl-L-methionine + 8 ATP = PF1022D + 8 AMP + 4 S-adenosyl-L-homocysteine + 8 diphosphate + 8 H(+). The enzyme catalyses 4 (R)-lactate + 4 L-leucine + 4 S-adenosyl-L-methionine + 8 ATP = PF1022F + 8 AMP + 4 S-adenosyl-L-homocysteine + 8 diphosphate + 8 H(+). Its function is as follows. Nonribosomal peptide synthetase that synthesizes cyclooctadepsipeptides (CODPs) PF 1022 that show powerful broad-spectrum anthelmintic activity with low toxicity in animals. Couples 4 N-methyl-L-leucines and a varying content of alpha-D-hydroxy acids (D-lactates or D-phenyllactates) in an alternative fashion. The enzyme is capable of synthesizing all known natural cyclooctadepsipeptides of the PF1022 type differing in the content of D-lactate and D-phenyllactate, using from 4 D-lactates (PF 1022F) to 4 D-phenyllactates (PF 1022B), respectively. The formation of different PF-related compounds is mainly controlled by the molar ratio of the hydroxy acids. N-methylation of the substrate L-leucine takes place after covalent binding prior to peptide bond formation. In Rosellinia sp. (Mycelia sterilia), this protein is PF 1022-synthetase.